The sequence spans 329 residues: ATP-dependent (S)-NAD(P)H-hydrate dehydratase (329 aa).

Residues 35-326 enclose the YjeF C-terminal domain; that stretch reads TLQLVRNIIP…AEVGAAFSKL (292 aa). Tyrosine 67 is subject to Phosphotyrosine. (6S)-NADPHX contacts are provided by residues glycine 135 and 188–194; that span reads NHMEFSR. 2 N-linked (GlcNAc...) asparagine glycosylation sites follow: asparagine 207 and asparagine 222. Residues 228–232 and 247–256 each bind ATP; these read KGERD and GSSRRCGGQG. (6S)-NADPHX is bound at residue aspartate 257. N-linked (GlcNAc...) asparagine glycosylation occurs at asparagine 279.

This sequence belongs to the NnrD/CARKD family. It depends on Mg(2+) as a cofactor.

It localises to the mitochondrion. The enzyme catalyses (6S)-NADHX + ATP = ADP + phosphate + NADH + H(+). It catalyses the reaction (6S)-NADPHX + ATP = ADP + phosphate + NADPH + H(+). Functionally, catalyzes the dehydration of the S-form of NAD(P)HX at the expense of ATP, which is converted to ADP. Together with NAD(P)HX epimerase, which catalyzes the epimerization of the S- and R-forms, the enzyme allows the repair of both epimers of NAD(P)HX, a damaged form of NAD(P)H that is a result of enzymatic or heat-dependent hydration. In Pongo abelii (Sumatran orangutan), this protein is ATP-dependent (S)-NAD(P)H-hydrate dehydratase.